The chain runs to 116 residues: Anti-sigma F factor antagonist (116 aa).

Residues Leu-3 to Leu-113 form the STAS domain. Ser-58 is subject to Phosphoserine.

This sequence belongs to the anti-sigma-factor antagonist family. Post-translationally, phosphorylated by SpoIIAB on a serine residue.

In terms of biological role, in the phosphorylated form it could act as an anti-anti-sigma factor that counteracts SpoIIAB and thus releases sigma f from inhibition. The polypeptide is Anti-sigma F factor antagonist (spoIIAA) (Heyndrickxia coagulans (Weizmannia coagulans)).